Consider the following 372-residue polypeptide: PqqA peptide cyclase (372 aa).

The 216-residue stretch at 4-219 (APPPLSVLLE…VDTARRELGD (216 aa)) folds into the Radical SAM core domain. Residues Cys18, Cys22, and Cys25 each coordinate [4Fe-4S] cluster. The disordered stretch occupies residues 342–372 (ATAEREAAAPAPEFIYRRPERPAPATADTLE).

It belongs to the radical SAM superfamily. PqqE family. As to quaternary structure, interacts with PqqD. The interaction is necessary for activity of PqqE. It depends on [4Fe-4S] cluster as a cofactor.

The enzyme catalyses [PQQ precursor protein] + S-adenosyl-L-methionine = E-Y cross-linked-[PQQ precursor protein] + 5'-deoxyadenosine + L-methionine + H(+). Its pathway is cofactor biosynthesis; pyrroloquinoline quinone biosynthesis. In terms of biological role, catalyzes the cross-linking of a glutamate residue and a tyrosine residue in the PqqA protein as part of the biosynthesis of pyrroloquinoline quinone (PQQ). This is PqqA peptide cyclase from Xanthomonas oryzae pv. oryzae (strain MAFF 311018).